We begin with the raw amino-acid sequence, 61 residues long: Sec-independent protein translocase protein TatA (61 aa).

A helical transmembrane segment spans residues 2-22 (GLSGISPLSLLLILAIIVALF).

The protein belongs to the TatA/E family. The Tat system comprises two distinct complexes: a TatABC complex, containing multiple copies of TatA, TatB and TatC subunits, and a separate TatA complex, containing only TatA subunits. Substrates initially bind to the TatABC complex, which probably triggers association of the separate TatA complex to form the active translocon.

Its subcellular location is the cell inner membrane. Functionally, part of the twin-arginine translocation (Tat) system that transports large folded proteins containing a characteristic twin-arginine motif in their signal peptide across membranes. TatA could form the protein-conducting channel of the Tat system. The polypeptide is Sec-independent protein translocase protein TatA (Legionella pneumophila (strain Paris)).